The chain runs to 790 residues: Kinesin-like protein KIN-14D (790 aa).

Disordered stretches follow at residues 1 to 56 and 116 to 139; these read MPLR…DVGS and DKEN…LDAK. Residues 1–66 form a globular region; the sequence is MPLRNQNRAP…TEECGKVEFT (66 aa). A compositionally biased stretch (basic and acidic residues) spans 16 to 33; the sequence is VKKEALSSIPFDKRRKET. The span at 34–55 shows a compositional bias: polar residues; it reads QGTGRRQVLSTVNRQDANSDVG. Coiled-coil stretches lie at residues 117 to 316 and 347 to 426; these read KENL…HVVQ and SLEE…LELK. Basic and acidic residues predominate over residues 127–139; it reads AEKRYSDKELDAK. Residues 428–769 enclose the Kinesin motor domain; that stretch reads NIRVFCRVRP…LRFAARVNAC (342 aa). Residue 513-520 coordinates ATP; that stretch reads GQTGSGKT.

This sequence belongs to the TRAFAC class myosin-kinesin ATPase superfamily. Kinesin family. KIN-14 subfamily. Slightly expressed in anther lobes with pollen mother cells at anther stage 5. Strongly expressed at anther stage 6 in the tapetum and meiotic cells. Also detected in the gynoecium and the ovule.

It localises to the cytoplasm. The protein localises to the cytoskeleton. The protein resides in the phragmoplast. Kinesin that supports microtubule movement in an ATP-dependent manner and that functions as a minus-end directed motor as well as a plus-end tracking protein. During mitosis, is involved in early spindle assembly. Participates in the capture of antiparallel interpolar microtubules and helps in generating force to coalign microtubules. The polypeptide is Kinesin-like protein KIN-14D (Arabidopsis thaliana (Mouse-ear cress)).